Here is a 248-residue protein sequence, read N- to C-terminus: Proteasome subunit alpha (248 aa).

Position 2 is an N-acetylserine; partial (serine 2).

This sequence belongs to the peptidase T1A family. As to quaternary structure, the 20S proteasome core is composed of 14 alpha and 14 beta subunits that assemble into four stacked heptameric rings, resulting in a barrel-shaped structure. The two inner rings, each composed of seven catalytic beta subunits, are sandwiched by two outer rings, each composed of seven alpha subunits. The catalytic chamber with the active sites is on the inside of the barrel. Has a gated structure, the ends of the cylinder being occluded by the N-termini of the alpha-subunits. Is capped by the proteasome-associated ATPase, ARC.

It is found in the cytoplasm. The protein operates within protein degradation; proteasomal Pup-dependent pathway. With respect to regulation, the formation of the proteasomal ATPase ARC-20S proteasome complex, likely via the docking of the C-termini of ARC into the intersubunit pockets in the alpha-rings, may trigger opening of the gate for substrate entry. Interconversion between the open-gate and close-gate conformations leads to a dynamic regulation of the 20S proteasome proteolysis activity. Functionally, component of the proteasome core, a large protease complex with broad specificity involved in protein degradation. This Mycobacterium tuberculosis (strain CDC 1551 / Oshkosh) protein is Proteasome subunit alpha.